The sequence spans 85 residues: Protein U62 (85 aa).

It belongs to the herpesviridae UL91 family.

This is Protein U62 (U62) from Homo sapiens (Human).